The sequence spans 478 residues: Cytochrome P450 family 716 subfamily AD polypeptide 4 (478 aa).

A helical transmembrane segment spans residues 1–21; it reads MELFLPSVLLILTVFCFYYLF. C425 contributes to the heme binding site.

The protein belongs to the cytochrome P450 family. It depends on heme as a cofactor. Mainly expressed in petioles and, to a lower extent, in roots.

It is found in the membrane. The catalysed reaction is (1S,3bR,4R,5aR,9aR,9bR,11aS)-1-[(4R)-5-[(2S)-3,3-dimethyloxiran-2-yl]-1,4-dihydroxybutan-2-yl]-3b,6,6,9a,11a-pentamethyl-7-oxo-1H,2H,3bH,4H,5H,5aH,6H,7H,9aH,9bH,10H,11H,11aH-cyclopenta[a]phenanthren-4-yl acetate + reduced [NADPH--hemoprotein reductase] + O2 = (1S,3bR,4R,5aR,9aR,9bR,11aS)-1-(1-hydroxy-4-oxobutan-2-yl)-3b,6,6,9a,11a-pentamethyl-7-oxo-1H,2H,3bH,4H,5H,5aH,6H,7H,9aH,9bH,10H,11H,11aH-cyclopenta[a]phenanthren-4-yl acetate + 2-methylpropanoate + oxidized [NADPH--hemoprotein reductase] + H2O + 2 H(+). Its pathway is secondary metabolite biosynthesis; terpenoid biosynthesis. Monooxygenase involved in the biosynthesis of limonoids triterpene natural products such as azadirachtin, an antifeedant widely used as bioinsecticide, and possessing many medicinal applications including anti-tumoral, anti-malarial, anti-rheumatic, antibacterial, anti-inflammatory, anti-pyretic and diuretic effects. Catalyzes the formation of (1S,3bR,4R,5aR,9aR,9bR,11aS)-1-(1-hydroxy-4-oxobutan-2-yl)-3b,6,6,9a,11a-pentamethyl-7-oxo-1H,2H,3bH,4H,5H,5aH,6H,7H,9aH,9bH,10H,11H,11aH-cyclopenta[a]phenanthren-4-yl acetate. This is Cytochrome P450 family 716 subfamily AD polypeptide 4 from Melia azedarach (Chinaberry tree).